Consider the following 428-residue polypeptide: Enolase (428 aa).

(2R)-2-phosphoglycerate is bound at residue Q163. The Proton donor role is filled by E205. The Mg(2+) site is built by D242, E285, and D311. The (2R)-2-phosphoglycerate site is built by K336, R365, S366, and K387. Residue K336 is the Proton acceptor of the active site.

This sequence belongs to the enolase family. Requires Mg(2+) as cofactor.

The protein localises to the cytoplasm. Its subcellular location is the secreted. It localises to the cell surface. The catalysed reaction is (2R)-2-phosphoglycerate = phosphoenolpyruvate + H2O. It participates in carbohydrate degradation; glycolysis; pyruvate from D-glyceraldehyde 3-phosphate: step 4/5. In terms of biological role, catalyzes the reversible conversion of 2-phosphoglycerate (2-PG) into phosphoenolpyruvate (PEP). It is essential for the degradation of carbohydrates via glycolysis. In Desulfatibacillum aliphaticivorans, this protein is Enolase.